We begin with the raw amino-acid sequence, 369 residues long: Glycolate oxidase 5 (369 aa).

The FMN hydroxy acid dehydrogenase domain maps to 1-360 (MGEITNVTEY…TRNHVITEAD (360 aa)). Position 25 (Y25) interacts with glyoxylate. FMN is bound by residues 78–80 (PSA), S107, 128–130 (QLY), and T156. Residue Y130 participates in glyoxylate binding. Glyoxylate is bound at residue R165. The FMN site is built by K231 and S253. H255 and R258 together coordinate glyoxylate. H255 (proton acceptor) is an active-site residue. FMN-binding positions include 286-290 (DGGVR) and 309-310 (GR). Positions 367–369 (SRL) match the Microbody targeting signal motif.

It belongs to the FMN-dependent alpha-hydroxy acid dehydrogenase family. Homotetramer. FMN is required as a cofactor.

The protein resides in the peroxisome. The catalysed reaction is glycolate + O2 = glyoxylate + H2O2. The protein operates within photosynthesis; photorespiration; glycine from 2-phosphoglycolate: step 2/3. Functionally, catalyzes the oxidation of glycolate to glyoxylate, with a reduction of O2 to H2O2. Is a key enzyme in photorespiration in green plants. This chain is Glycolate oxidase 5 (GLO5), found in Oryza sativa subsp. japonica (Rice).